Consider the following 578-residue polypeptide: Proline--tRNA ligase (578 aa).

The protein belongs to the class-II aminoacyl-tRNA synthetase family. ProS type 1 subfamily. Homodimer.

It is found in the cytoplasm. The enzyme catalyses tRNA(Pro) + L-proline + ATP = L-prolyl-tRNA(Pro) + AMP + diphosphate. Catalyzes the attachment of proline to tRNA(Pro) in a two-step reaction: proline is first activated by ATP to form Pro-AMP and then transferred to the acceptor end of tRNA(Pro). As ProRS can inadvertently accommodate and process non-cognate amino acids such as alanine and cysteine, to avoid such errors it has two additional distinct editing activities against alanine. One activity is designated as 'pretransfer' editing and involves the tRNA(Pro)-independent hydrolysis of activated Ala-AMP. The other activity is designated 'posttransfer' editing and involves deacylation of mischarged Ala-tRNA(Pro). The misacylated Cys-tRNA(Pro) is not edited by ProRS. This Burkholderia multivorans (strain ATCC 17616 / 249) protein is Proline--tRNA ligase.